Here is a 549-residue protein sequence, read N- to C-terminus: Membrane protein insertase YidC (549 aa).

Residues 8–28 (VLLATVLSVAVLIVWQFVFPS) form a helical membrane-spanning segment. The span at 29–39 (PKPKPQPPKPP) shows a compositional bias: pro residues. The interval 29–68 (PKPKPQPPKPPEAAQRAEAPAAPAPGQPAAQAPAPAVPQD) is disordered. Composition is skewed to low complexity over residues 40–49 (EAAQRAEAPA) and 55–68 (QPAA…VPQD). Transmembrane regions (helical) follow at residues 328–348 (IDYG…LFVM), 354–374 (LVAN…VLLY), 424–444 (LGGC…YATL), and 502–522 (PGFF…YIFV).

The protein belongs to the OXA1/ALB3/YidC family. Type 1 subfamily. In terms of assembly, interacts with the Sec translocase complex via SecD. Specifically interacts with transmembrane segments of nascent integral membrane proteins during membrane integration.

It is found in the cell inner membrane. Functionally, required for the insertion and/or proper folding and/or complex formation of integral membrane proteins into the membrane. Involved in integration of membrane proteins that insert both dependently and independently of the Sec translocase complex, as well as at least some lipoproteins. Aids folding of multispanning membrane proteins. The polypeptide is Membrane protein insertase YidC (Anaeromyxobacter sp. (strain Fw109-5)).